A 96-amino-acid polypeptide reads, in one-letter code: Small ribosomal subunit protein bS18 (96 aa).

It belongs to the bacterial ribosomal protein bS18 family. Part of the 30S ribosomal subunit. Forms a tight heterodimer with protein bS6.

Binds as a heterodimer with protein bS6 to the central domain of the 16S rRNA, where it helps stabilize the platform of the 30S subunit. This is Small ribosomal subunit protein bS18 from Borrelia garinii subsp. bavariensis (strain ATCC BAA-2496 / DSM 23469 / PBi) (Borreliella bavariensis).